We begin with the raw amino-acid sequence, 339 residues long: Protein-glutamate methylesterase/protein-glutamine glutaminase 3 (339 aa).

Positions 2 to 119 constitute a Response regulatory domain; it reads NIGIVNDLPL…GLSTDASPQA (118 aa). Position 53 is a 4-aspartylphosphate (D53). One can recognise a CheB-type methylesterase domain in the interval 141–336; sequence PGPAPTRGQP…PQLIARIALT (196 aa). Residues S158, H185, and D278 contribute to the active site.

Belongs to the CheB family. Phosphorylated by CheA. Phosphorylation of the N-terminal regulatory domain activates the methylesterase activity.

The protein localises to the cytoplasm. It carries out the reaction [protein]-L-glutamate 5-O-methyl ester + H2O = L-glutamyl-[protein] + methanol + H(+). The catalysed reaction is L-glutaminyl-[protein] + H2O = L-glutamyl-[protein] + NH4(+). Its function is as follows. Involved in chemotaxis. Part of a chemotaxis signal transduction system that modulates chemotaxis in response to various stimuli. Catalyzes the demethylation of specific methylglutamate residues introduced into the chemoreceptors (methyl-accepting chemotaxis proteins or MCP) by CheR. Also mediates the irreversible deamidation of specific glutamine residues to glutamic acid. The polypeptide is Protein-glutamate methylesterase/protein-glutamine glutaminase 3 (Burkholderia orbicola (strain AU 1054)).